Reading from the N-terminus, the 508-residue chain is Photosystem II CP47 reaction center protein (508 aa).

Transmembrane regions (helical) follow at residues 21–36 (SVHI…WAGS), 101–115 (IVFS…IWHW), 140–156 (GIHL…FGAF), 203–218 (IAAG…FHLS), 237–252 (VLSS…AFVV), and 457–472 (SFAL…HGAR).

It belongs to the PsbB/PsbC family. PsbB subfamily. In terms of assembly, PSII is composed of 1 copy each of membrane proteins PsbA, PsbB, PsbC, PsbD, PsbE, PsbF, PsbH, PsbI, PsbJ, PsbK, PsbL, PsbM, PsbT, PsbX, PsbY, PsbZ, Psb30/Ycf12, at least 3 peripheral proteins of the oxygen-evolving complex and a large number of cofactors. It forms dimeric complexes. Requires Binds multiple chlorophylls. PSII binds additional chlorophylls, carotenoids and specific lipids. as cofactor.

The protein resides in the plastid. It is found in the chloroplast thylakoid membrane. Its function is as follows. One of the components of the core complex of photosystem II (PSII). It binds chlorophyll and helps catalyze the primary light-induced photochemical processes of PSII. PSII is a light-driven water:plastoquinone oxidoreductase, using light energy to abstract electrons from H(2)O, generating O(2) and a proton gradient subsequently used for ATP formation. In Gossypium barbadense (Sea Island cotton), this protein is Photosystem II CP47 reaction center protein.